We begin with the raw amino-acid sequence, 753 residues long: MDLPCQDWVCHVEQKWAELRSEETERFSLLTDIDAIFNYGLSLICPEDLNILSRISEKFSVKKSPETASEFRQQGNLSFKVKDYPAAVLHYSKGVCHADKNTDELSLCYANRSAALFYQGLYQACLEDIRRSLEAGYPSHLQDKLQTRQTACQNQLRKAEKPNIPHTDHQLSPCQKTVNSTGHLSDGVSVYFSSDKGRHMLVMENKPAGEVVLEDEAYCSVLIPANIFNTGTNKAVETFGTEDRHCHHCLSQSLSFVPCPKCSYARYCGESCQKDAWDQWHQWECPVGADLLAIGVLGHLALRVVLKAGQTEVQMGIKNTKDHVTTYKNDSPVQLSLGGDCGKSLDHTDCFHGSSYMGIYSLLPHVAQHSPASRFLMAITMAVIYGKLQGGPPPNKWMSFKDEGVKASWQPEMSMLGATALRHMMQLRCNAQAITAVRVKEESGMAVQSSSEIRIATAIFPVLSLLNHSCSPNTSISFTTGFQPDPHNQLGCSEGHFDHPKGSRSGVTVTVRASKDLTAGQEILHCYGPHRSRMEVKERQRLLLEQYFFQCVCQACQRDLSEGSPNAKEHTAPGMKCVKCGKPLQSHTDGYTCSWSSCGHQISSADVQNRLQGFQLLLDEAVHLMEQDRLNEALHILQSAFSQANSILTETHPFQGELADALARLYASTGEWSLAASHLKRSLVAIQAQFGEDSIELGRQLFKLAQLHFNGRDGVASLSVIPRARRLLSLHCSPRCEELQELSEMEHCLQGLL.

112 to 114 (RSA) is an S-adenosyl-L-methionine binding site. One can recognise an SET domain in the interval 186–528 (DGVSVYFSSD…AGQEILHCYG (343 aa)). Positions 246, 249, 259, 262, 268, 272, 281, and 285 each coordinate Zn(2+). The segment at 246-285 (CHHCLSQSLSFVPCPKCSYARYCGESCQKDAWDQWHQWEC) adopts an MYND-type zinc-finger fold. Residues 467–468 (NH) and tyrosine 527 each bind S-adenosyl-L-methionine.

It belongs to the class V-like SAM-binding methyltransferase superfamily.

It localises to the nucleus. It is found in the cytoplasm. The catalysed reaction is L-lysyl-[protein] + S-adenosyl-L-methionine = N(6)-methyl-L-lysyl-[protein] + S-adenosyl-L-homocysteine + H(+). In terms of biological role, protein-lysine N-methyltransferase. Monomethylates PRMT5, modulating its transcriptional activity. May also act as a histone methyltransferase. Plays a critical role in cardiac development. Acts as a key epigenetic regulator of gene expression during cardiac development via its dual activities as a methyltransferase and negative regulator of HDAC1. This chain is Protein-lysine N-methyltransferase SMYD4 (smyd4), found in Danio rerio (Zebrafish).